The primary structure comprises 839 residues: MPRLDVEKTIEELSLGEKVALTAGIDFWHTASVPRLNIPTLRMSDGPNGVRGTRFFNGVPAACFPCATALGATWDTELLHEIGQLMGEESIAKGSHIILGPTINTQRSPLGGRGFESFAEDGVLSGLLAGYISKGIQEKGVAATLKHFVCNDQEHQRMAVDSIVTQRALREIYLLPFQLAMRICRTACVMTAYNKVNGTHVSQNKEIITDILRKEWGWDGLVMSDWFGTYSTSDAINAGLDLEMPGKTRWRGTALAHAVSSNEVAEFVMDERVRNVLNLVNFVDGLNIPENAPEKALNRPQDQALLRRAAAESVVLMKNEEDILPLKKEKSILVIGPNSKVAAYCGGGSASLDAYYTVTPFEGVSAQSKGEVKFSQGVYSHKDLPLLGPLLKTADGKTGFSFKVYNEHPSESNRELIEQLHLVSSSGFLMDYVNPKIKSLTYYVDMEGLFTPEEDGVYDFGVTVVGTGQLFIDGELVVDNTKNQRQGSAFFGSATVEEKGSKELKAGQTYKVLFQFGTAPTSDLDTRGVVVFGPGGFRFGASRRVGQEELISNAVKLASEAEQVVVFAGLTSEWETEGYDRDHMDLPPGSDEMISRVLDVNPNAVVVIQSGTPVTMPWANKTKALLHAWFGGNECGNGIADVLYGDVNPSGKLPITFPVRLQDNPSYVNFRSERGRVLYGEDVYVGYRYYEKVDLAPLFPFGHGLSYTTFTRSDLTLTTTPEKPQYEESGEPITATVTVTNTGKVAGAEIVQLWVAPPATEVNRPVRELKGFTKVFLQPGEQKKVEIVVEKKLATSWFDEMREKWASEKGEYEVLVTGTGEGVLKSSFKVEKTRYWLGL.

An N-linked (GlcNAc...) asparagine glycan is attached at asparagine 197. The active site involves aspartate 225. The PA14 domain occupies 395–555; it reads DGKTGFSFKV…GQEELISNAV (161 aa). An N-linked (GlcNAc...) asparagine glycan is attached at asparagine 620.

It belongs to the glycosyl hydrolase 3 family.

It localises to the secreted. It catalyses the reaction Hydrolysis of terminal, non-reducing beta-D-glucosyl residues with release of beta-D-glucose.. It functions in the pathway glycan metabolism; cellulose degradation. In terms of biological role, beta-glucosidases are one of a number of cellulolytic enzymes involved in the degradation of cellulosic biomass. Catalyzes the last step releasing glucose from the inhibitory cellobiose. This is Probable beta-glucosidase I (bglI) from Aspergillus oryzae (strain ATCC 42149 / RIB 40) (Yellow koji mold).